Consider the following 436-residue polypeptide: D-aminoacyl-tRNA deacylase (436 aa).

Belongs to the DtdA deacylase family. In terms of assembly, monomer. Requires Zn(2+) as cofactor.

It carries out the reaction a D-aminoacyl-tRNA + H2O = a tRNA + a D-alpha-amino acid + H(+). It catalyses the reaction glycyl-tRNA(Ala) + H2O = tRNA(Ala) + glycine + H(+). Functionally, D-aminoacyl-tRNA deacylase with broad substrate specificity. By recycling D-aminoacyl-tRNA to D-amino acids and free tRNA molecules, this enzyme counteracts the toxicity associated with the formation of D-aminoacyl-tRNA entities in vivo. The protein is D-aminoacyl-tRNA deacylase of Methanoregula boonei (strain DSM 21154 / JCM 14090 / 6A8).